The sequence spans 154 residues: SsrA-binding protein (154 aa).

It belongs to the SmpB family.

It localises to the cytoplasm. Functionally, required for rescue of stalled ribosomes mediated by trans-translation. Binds to transfer-messenger RNA (tmRNA), required for stable association of tmRNA with ribosomes. tmRNA and SmpB together mimic tRNA shape, replacing the anticodon stem-loop with SmpB. tmRNA is encoded by the ssrA gene; the 2 termini fold to resemble tRNA(Ala) and it encodes a 'tag peptide', a short internal open reading frame. During trans-translation Ala-aminoacylated tmRNA acts like a tRNA, entering the A-site of stalled ribosomes, displacing the stalled mRNA. The ribosome then switches to translate the ORF on the tmRNA; the nascent peptide is terminated with the 'tag peptide' encoded by the tmRNA and targeted for degradation. The ribosome is freed to recommence translation, which seems to be the essential function of trans-translation. This chain is SsrA-binding protein, found in Staphylococcus aureus (strain Mu3 / ATCC 700698).